A 218-amino-acid chain; its full sequence is Cytidylate kinase (218 aa).

11–19 (GPGASGKGT) lines the ATP pocket.

Belongs to the cytidylate kinase family. Type 1 subfamily.

The protein resides in the cytoplasm. The enzyme catalyses CMP + ATP = CDP + ADP. The catalysed reaction is dCMP + ATP = dCDP + ADP. The sequence is that of Cytidylate kinase from Neisseria gonorrhoeae (strain ATCC 700825 / FA 1090).